Reading from the N-terminus, the 260-residue chain is Tryptophan 2,3-dioxygenase (260 aa).

Residues 34–38 (FIVIH) and R100 each bind substrate. A heme-binding site is contributed by H219. T233 serves as a coordination point for substrate.

The protein belongs to the tryptophan 2,3-dioxygenase family. In terms of assembly, homotetramer. Heme is required as a cofactor.

It catalyses the reaction L-tryptophan + O2 = N-formyl-L-kynurenine. It functions in the pathway amino-acid degradation; L-tryptophan degradation via kynurenine pathway; L-kynurenine from L-tryptophan: step 1/2. In terms of biological role, heme-dependent dioxygenase that catalyzes the oxidative cleavage of the L-tryptophan (L-Trp) pyrrole ring and converts L-tryptophan to N-formyl-L-kynurenine. Catalyzes the oxidative cleavage of the indole moiety. This is Tryptophan 2,3-dioxygenase from Herpetosiphon aurantiacus (strain ATCC 23779 / DSM 785 / 114-95).